The chain runs to 140 residues: 3-hydroxyacyl-[acyl-carrier-protein] dehydratase FabZ (140 aa).

H47 is an active-site residue.

This sequence belongs to the thioester dehydratase family. FabZ subfamily.

Its subcellular location is the cytoplasm. It carries out the reaction a (3R)-hydroxyacyl-[ACP] = a (2E)-enoyl-[ACP] + H2O. In terms of biological role, involved in unsaturated fatty acids biosynthesis. Catalyzes the dehydration of short chain beta-hydroxyacyl-ACPs and long chain saturated and unsaturated beta-hydroxyacyl-ACPs. This is 3-hydroxyacyl-[acyl-carrier-protein] dehydratase FabZ from Streptococcus mutans serotype c (strain ATCC 700610 / UA159).